We begin with the raw amino-acid sequence, 285 residues long: 4-diphosphocytidyl-2-C-methyl-D-erythritol kinase (285 aa).

Lys-9 is a catalytic residue. Residue 89–99 (PLGAGLGGGSS) coordinates ATP. Residue Asp-131 is part of the active site.

Belongs to the GHMP kinase family. IspE subfamily.

The catalysed reaction is 4-CDP-2-C-methyl-D-erythritol + ATP = 4-CDP-2-C-methyl-D-erythritol 2-phosphate + ADP + H(+). The protein operates within isoprenoid biosynthesis; isopentenyl diphosphate biosynthesis via DXP pathway; isopentenyl diphosphate from 1-deoxy-D-xylulose 5-phosphate: step 3/6. Its function is as follows. Catalyzes the phosphorylation of the position 2 hydroxy group of 4-diphosphocytidyl-2C-methyl-D-erythritol. The polypeptide is 4-diphosphocytidyl-2-C-methyl-D-erythritol kinase (Thermodesulfovibrio yellowstonii (strain ATCC 51303 / DSM 11347 / YP87)).